The primary structure comprises 310 residues: Haloalkane dehalogenase (310 aa).

The AB hydrolase-1 domain occupies 30-140 (PVVLFLHGNP…PMPTWQDFHH (111 aa)). Asp103 functions as the Nucleophile in the catalytic mechanism. Residue Glu127 is the Proton donor of the active site. His280 (proton acceptor) is an active-site residue.

Belongs to the haloalkane dehalogenase family. Type 2 subfamily. In terms of assembly, monomer.

The catalysed reaction is 1-haloalkane + H2O = a halide anion + a primary alcohol + H(+). In terms of biological role, catalyzes hydrolytic cleavage of carbon-halogen bonds in halogenated aliphatic compounds, leading to the formation of the corresponding primary alcohols, halide ions and protons. This Bradyrhizobium diazoefficiens (strain JCM 10833 / BCRC 13528 / IAM 13628 / NBRC 14792 / USDA 110) protein is Haloalkane dehalogenase.